The sequence spans 499 residues: Glycerol kinase (499 aa).

Thr12 contacts ADP. Residues Thr12, Thr13, and Ser14 each coordinate ATP. Thr12 lines the sn-glycerol 3-phosphate pocket. Arg16 contacts ADP. Arg82, Glu83, Tyr134, and Asp245 together coordinate sn-glycerol 3-phosphate. Residues Arg82, Glu83, Tyr134, Asp245, and Gln246 each contribute to the glycerol site. ADP-binding residues include Thr267 and Gly311. ATP contacts are provided by Thr267, Gly311, Gln315, and Gly412. Residues Gly412 and Asn416 each coordinate ADP.

Belongs to the FGGY kinase family.

It catalyses the reaction glycerol + ATP = sn-glycerol 3-phosphate + ADP + H(+). The protein operates within polyol metabolism; glycerol degradation via glycerol kinase pathway; sn-glycerol 3-phosphate from glycerol: step 1/1. Its activity is regulated as follows. Inhibited by fructose 1,6-bisphosphate (FBP). Key enzyme in the regulation of glycerol uptake and metabolism. Catalyzes the phosphorylation of glycerol to yield sn-glycerol 3-phosphate. This Acidiphilium cryptum (strain JF-5) protein is Glycerol kinase.